We begin with the raw amino-acid sequence, 177 residues long: Large ribosomal subunit protein uL6 (177 aa).

The protein belongs to the universal ribosomal protein uL6 family. In terms of assembly, part of the 50S ribosomal subunit.

This protein binds to the 23S rRNA, and is important in its secondary structure. It is located near the subunit interface in the base of the L7/L12 stalk, and near the tRNA binding site of the peptidyltransferase center. The sequence is that of Large ribosomal subunit protein uL6 from Aeromonas salmonicida (strain A449).